The following is a 348-amino-acid chain: tRNA N6-adenosine threonylcarbamoyltransferase (348 aa).

Fe cation is bound by residues His-116 and His-120. Substrate-binding positions include 138 to 142 (IISGG), Asp-171, Gly-184, and Asn-282. Residue Asp-310 participates in Fe cation binding.

Belongs to the KAE1 / TsaD family. Requires Fe(2+) as cofactor.

Its subcellular location is the cytoplasm. It carries out the reaction L-threonylcarbamoyladenylate + adenosine(37) in tRNA = N(6)-L-threonylcarbamoyladenosine(37) in tRNA + AMP + H(+). In terms of biological role, required for the formation of a threonylcarbamoyl group on adenosine at position 37 (t(6)A37) in tRNAs that read codons beginning with adenine. Is involved in the transfer of the threonylcarbamoyl moiety of threonylcarbamoyl-AMP (TC-AMP) to the N6 group of A37, together with TsaE and TsaB. TsaD likely plays a direct catalytic role in this reaction. The sequence is that of tRNA N6-adenosine threonylcarbamoyltransferase from Ehrlichia ruminantium (strain Welgevonden).